A 247-amino-acid polypeptide reads, in one-letter code: MARSKRTIKMQIEYDGTGYSGWQRQPGDVVTVQGEIERVLERIMQEPVSIDGAGRTDSGVHARRQVASFATCSPMPLGRLIYSANSLLPSTIRINAMRQAPESFHARFSATSREYRYFLLEHPSAIDSRFAGCSHGKPDVGAMNRLALMLIGTHDFAAFSKETPDQYGTLCTVTAARWYRSGRFHVFRIEANRFLRSMVRFLVAGMIEVGMGRLEEGAFARMLESGHRPPKLKPADAAGLFLWKVRY.

D57 acts as the Nucleophile in catalysis. Residue Y115 participates in substrate binding.

It belongs to the tRNA pseudouridine synthase TruA family. In terms of assembly, homodimer.

It carries out the reaction uridine(38/39/40) in tRNA = pseudouridine(38/39/40) in tRNA. Its function is as follows. Formation of pseudouridine at positions 38, 39 and 40 in the anticodon stem and loop of transfer RNAs. The sequence is that of tRNA pseudouridine synthase A from Chlorobaculum tepidum (strain ATCC 49652 / DSM 12025 / NBRC 103806 / TLS) (Chlorobium tepidum).